A 214-amino-acid chain; its full sequence is MILILLGPPGAGKGTQAKLLSSELGIPHISTGDMFRDHKARGTEIGKQVQAIMDAGGLVTDDITNAMVKERLSRPDVAPGFILDGYPRTVVQAGYLDGLLRSLGRSIDRALSYEVPEELVVERISGRRSCPRCGAVYHVSQNPPHRAGFCDRDDTALVQREDDKPENVRKRMQEYGTKTEPLKRYYRDRGELSDVEGVGTPEGILAVTKKVLGR.

G10–T15 contributes to the ATP binding site. The segment at S30–V59 is NMP. Residues T31, R36, G57–V59, G85–R88, and Q92 contribute to the AMP site. Positions G126–D163 are LID. R127 contributes to the ATP binding site. Residues C130 and C133 each contribute to the Zn(2+) site. ATP is bound at residue V136–Y137. Zn(2+) is bound by residues C150 and D153. AMP contacts are provided by R160 and R171. Residue G199 participates in ATP binding.

This sequence belongs to the adenylate kinase family. As to quaternary structure, monomer.

The protein resides in the cytoplasm. The enzyme catalyses AMP + ATP = 2 ADP. Its pathway is purine metabolism; AMP biosynthesis via salvage pathway; AMP from ADP: step 1/1. Its function is as follows. Catalyzes the reversible transfer of the terminal phosphate group between ATP and AMP. Plays an important role in cellular energy homeostasis and in adenine nucleotide metabolism. The protein is Adenylate kinase of Anaeromyxobacter sp. (strain K).